The sequence spans 339 residues: DNA-directed RNA polymerase subunit alpha (339 aa).

Residues 1-235 (MTIQKNWQEL…DQLNVFVNFE (235 aa)) are alpha N-terminal domain (alpha-NTD). Residues 251–339 (FNPAFLKKVD…ELAKRFEDHY (89 aa)) are alpha C-terminal domain (alpha-CTD).

This sequence belongs to the RNA polymerase alpha chain family. Homodimer. The RNAP catalytic core consists of 2 alpha, 1 beta, 1 beta' and 1 omega subunit. When a sigma factor is associated with the core the holoenzyme is formed, which can initiate transcription.

It carries out the reaction RNA(n) + a ribonucleoside 5'-triphosphate = RNA(n+1) + diphosphate. Functionally, DNA-dependent RNA polymerase catalyzes the transcription of DNA into RNA using the four ribonucleoside triphosphates as substrates. The chain is DNA-directed RNA polymerase subunit alpha from Rhodopseudomonas palustris (strain BisA53).